The primary structure comprises 280 residues: C-type lectin domain family 1 member A (280 aa).

The interval 1 to 44 (MQAKYSSTRDMLDDDGDTTMSLHSQGSATTRHPEPRRTEHRAPS) is disordered. Topologically, residues 1–52 (MQAKYSSTRDMLDDDGDTTMSLHSQGSATTRHPEPRRTEHRAPSSTWRPVAL) are cytoplasmic. The segment covering 18 to 30 (TTMSLHSQGSATT) has biased composition (polar residues). Over residues 31–42 (RHPEPRRTEHRA) the composition is skewed to basic and acidic residues. The chain crosses the membrane as a helical; Signal-anchor for type II membrane protein span at residues 53 to 73 (TLLTLCLVLLIGLAALGLLFF). Topologically, residues 74-280 (QYYQLSNTGQ…VPPETLGEGD (207 aa)) are extracellular. N-linked (GlcNAc...) asparagine glycosylation is found at Asn-95 and Asn-169. The 115-residue stretch at 144 to 258 (HGDNCYQFYK…CKELKRCVCE (115 aa)) folds into the C-type lectin domain. Cystine bridges form between Cys-165–Cys-257 and Cys-236–Cys-249.

In terms of tissue distribution, expressed preferentially in dendritic cells.

The protein resides in the membrane. This chain is C-type lectin domain family 1 member A (CLEC1A), found in Homo sapiens (Human).